The following is a 386-amino-acid chain: Ethanolamine kinase 2 (386 aa).

Belongs to the choline/ethanolamine kinase family. Expressed in kidney, liver, ovary, testis and prostate.

It carries out the reaction ethanolamine + ATP = phosphoethanolamine + ADP + H(+). Its pathway is phospholipid metabolism; phosphatidylethanolamine biosynthesis; phosphatidylethanolamine from ethanolamine: step 1/3. Functionally, highly specific for ethanolamine phosphorylation. Does not have choline kinase activity. The sequence is that of Ethanolamine kinase 2 (ETNK2) from Homo sapiens (Human).